A 438-amino-acid polypeptide reads, in one-letter code: Na(+)/H(+) antiporter NhaA (438 aa).

11 helical membrane-spanning segments follow: residues 23–43 (FGGIFLFLNAVLAMVVANSFL), 62–82 (FFIGFSLHNWIDDVLMALFFL), 104–124 (SFPVIAAIGGMIAPGLIYFFL), 133–153 (GFGIPMATDIAFALGVIMLLG), 162–182 (VFLITLAVADDLGAIVVIALF), 185–205 (TNLKFAWLLGALGVVLVLAVL), 221–241 (VLLWFCVHQSGIHATIAAVIL), 302–322 (FLAPISGYFIMPLFAFANAGV), 337–357 (LGVILGLCLGKPLGIFLITFI), 372–392 (WWHILGAGLLAGIGFTMSMFI), and 410–430 (IAILLGSLISGIIGALYLFAL).

The protein belongs to the NhaA Na(+)/H(+) (TC 2.A.33) antiporter family.

The protein resides in the cell inner membrane. The enzyme catalyses Na(+)(in) + 2 H(+)(out) = Na(+)(out) + 2 H(+)(in). Its function is as follows. Na(+)/H(+) antiporter that extrudes sodium in exchange for external protons. The chain is Na(+)/H(+) antiporter NhaA from Helicobacter pylori (strain ATCC 700392 / 26695) (Campylobacter pylori).